The following is a 185-amino-acid chain: Intraflagellar transport protein 22 homolog (185 aa).

Residues 10-17, 63-67, and 123-126 each bind GTP; these read GPCESGKT, DCGGD, and HKPG. Ser137 bears the Phosphoserine mark.

The protein belongs to the small GTPase superfamily. Rab family. As to quaternary structure, component of the IFT complex B, at least composed of IFT20, IFT22, IFT25, IFT27, IFT46, IFT52, TRAF3IP1/IFT54, IFT57, IFT74, IFT80, IFT81, and IFT88. Interacts with IFT88. Interacts with CFAP61.

It is found in the cell projection. Its subcellular location is the cilium. Small GTPase-like component of the intraflagellar transport (IFT) complex B. This Homo sapiens (Human) protein is Intraflagellar transport protein 22 homolog (IFT22).